Here is a 548-residue protein sequence, read N- to C-terminus: Zinc metalloproteinase (548 aa).

The first 28 residues, 1-28 (MKKYYAVTGIALAVGMLCTTQLAGATQA), serve as a signal peptide directing secretion. A Zn(2+)-binding site is contributed by histidine 362. Glutamate 363 is an active-site residue. Histidine 366 and glutamate 386 together coordinate Zn(2+). The tract at residues 440 to 459 (SNWKPTATNPNDNNDQGGVH) is disordered. Over residues 442–459 (WKPTATNPNDNNDQGGVH) the composition is skewed to polar residues. Histidine 459 acts as the Proton donor in catalysis.

This sequence belongs to the peptidase M4 family. Requires Ca(2+) as cofactor. It depends on Zn(2+) as a cofactor.

Its subcellular location is the secreted. It is found in the cell wall. Zinc metalloprotease with hemolytic properties. This is Zinc metalloproteinase (hly) from Renibacterium salmoninarum.